The sequence spans 728 residues: Dehydrocurvularin biosynthesis regulator (728 aa).

The zn(2)-C6 fungal-type DNA-binding region spans C28–C58. 2 disordered regions span residues G75–R130 and Q606–A626. Residues R89–E109 are compositionally biased toward polar residues.

The protein localises to the nucleus. Transcription factor involved in regulation of the dehydrocurvularin biosynthesis gene cluster. The protein is Dehydrocurvularin biosynthesis regulator of Aspergillus terreus.